Reading from the N-terminus, the 340-residue chain is Anthranilate phosphoribosyltransferase (340 aa).

Residues Gly81, 84–85, Thr89, 91–94, 109–117, and Ala121 each bind 5-phospho-alpha-D-ribose 1-diphosphate; these read GD, NIST, and KHGNRNLSS. Gly81 serves as a coordination point for anthranilate. Ser93 contacts Mg(2+). Asn112 provides a ligand contact to anthranilate. Anthranilate is bound at residue Arg167. Residues Asp226 and Glu227 each coordinate Mg(2+).

This sequence belongs to the anthranilate phosphoribosyltransferase family. As to quaternary structure, homodimer. Mg(2+) serves as cofactor.

The enzyme catalyses N-(5-phospho-beta-D-ribosyl)anthranilate + diphosphate = 5-phospho-alpha-D-ribose 1-diphosphate + anthranilate. It participates in amino-acid biosynthesis; L-tryptophan biosynthesis; L-tryptophan from chorismate: step 2/5. Functionally, catalyzes the transfer of the phosphoribosyl group of 5-phosphorylribose-1-pyrophosphate (PRPP) to anthranilate to yield N-(5'-phosphoribosyl)-anthranilate (PRA). The sequence is that of Anthranilate phosphoribosyltransferase from Ruegeria sp. (strain TM1040) (Silicibacter sp.).